Here is a 160-residue protein sequence, read N- to C-terminus: Phosphopantetheine adenylyltransferase (160 aa).

It belongs to the eukaryotic CoaD family.

It is found in the cytoplasm. The enzyme catalyses (R)-4'-phosphopantetheine + ATP + H(+) = 3'-dephospho-CoA + diphosphate. It functions in the pathway cofactor biosynthesis; coenzyme A biosynthesis. Its function is as follows. Reversibly transfers an adenylyl group from ATP to 4'-phosphopantetheine, yielding dephospho-CoA (dPCoA) and pyrophosphate. This is Phosphopantetheine adenylyltransferase from Pyrococcus furiosus (strain ATCC 43587 / DSM 3638 / JCM 8422 / Vc1).